The chain runs to 232 residues: Biosynthetic peptidoglycan transglycosylase (232 aa).

The helical transmembrane segment at 14-34 (AAVALVLLYQLWIFAHVLWWI) threads the bilayer.

The protein belongs to the glycosyltransferase 51 family.

It is found in the cell inner membrane. The catalysed reaction is [GlcNAc-(1-&gt;4)-Mur2Ac(oyl-L-Ala-gamma-D-Glu-L-Lys-D-Ala-D-Ala)](n)-di-trans,octa-cis-undecaprenyl diphosphate + beta-D-GlcNAc-(1-&gt;4)-Mur2Ac(oyl-L-Ala-gamma-D-Glu-L-Lys-D-Ala-D-Ala)-di-trans,octa-cis-undecaprenyl diphosphate = [GlcNAc-(1-&gt;4)-Mur2Ac(oyl-L-Ala-gamma-D-Glu-L-Lys-D-Ala-D-Ala)](n+1)-di-trans,octa-cis-undecaprenyl diphosphate + di-trans,octa-cis-undecaprenyl diphosphate + H(+). It participates in cell wall biogenesis; peptidoglycan biosynthesis. Peptidoglycan polymerase that catalyzes glycan chain elongation from lipid-linked precursors. This chain is Biosynthetic peptidoglycan transglycosylase, found in Thiobacillus denitrificans (strain ATCC 25259 / T1).